A 235-amino-acid chain; its full sequence is Protein YIP4 (235 aa).

The next 5 helical transmembrane spans lie at 89–109 (ISANCDLWAPLAFIILYSLFV), 114–134 (SLFSSLFVSSWFILLVMALHL), 145–165 (LISYISISGYCLFPQVLNALV), 186–206 (VLSLVKLVVMALCLMWSVAAV), and 215–235 (IIEIYPLALCLFGMAWLSTIL).

This sequence belongs to the YIP1 family. Interacts with TVP18, TVP23, YIP1 and YIP5. Interacts with SEC4, YPT1, YPT6, YPT7, YPT10, YPT11, YPT31, YPT32 and YPT52; These proteins are all Rab GTPases.

Its subcellular location is the golgi apparatus membrane. May be involved in proper membrane localization of Rab GTPases. In Saccharomyces cerevisiae (strain ATCC 204508 / S288c) (Baker's yeast), this protein is Protein YIP4 (YIP4).